Reading from the N-terminus, the 335-residue chain is Karyogamy protein KAR4 (335 aa).

A disordered region spans residues 1-25 (MAFQDPTYDQNKSRHINNSHLQGPN). Positions 16–25 (INNSHLQGPN) are enriched in polar residues.

It belongs to the MT-A70-like family. In terms of assembly, component of the MIS (mRNA N6-methyladenosine (m6A) methylation) complex, at least composed of IME4, KAR4, MUM2, SLZ1, and VIR1. Interacts with VIR1.

The protein resides in the nucleus. Its subcellular location is the cytoplasm. Functionally, component of the MIS complex, a complex that mediates N6-methyladenosine (m6A) methylation of meiotic mRNAs and is required for initiation of meiosis, progression through the meiotic divisions and sporulation. May assist STE12 in the pheromone-dependent expression of KAR3 and CIK1. In Saccharomyces cerevisiae (strain ATCC 204508 / S288c) (Baker's yeast), this protein is Karyogamy protein KAR4 (KAR4).